We begin with the raw amino-acid sequence, 207 residues long: dTTP/UTP pyrophosphatase (207 aa).

The active-site Proton acceptor is the aspartate 79.

Belongs to the Maf family. YhdE subfamily. A divalent metal cation serves as cofactor.

It is found in the cytoplasm. The catalysed reaction is dTTP + H2O = dTMP + diphosphate + H(+). It carries out the reaction UTP + H2O = UMP + diphosphate + H(+). In terms of biological role, nucleoside triphosphate pyrophosphatase that hydrolyzes dTTP and UTP. May have a dual role in cell division arrest and in preventing the incorporation of modified nucleotides into cellular nucleic acids. The protein is dTTP/UTP pyrophosphatase of Nitrobacter winogradskyi (strain ATCC 25391 / DSM 10237 / CIP 104748 / NCIMB 11846 / Nb-255).